The chain runs to 333 residues: uncharacterized protein (333 aa).

Positions 1–23 are cleaved as a signal peptide; that stretch reads MSRSFMIILTIMLIALSLGEVLA. Residues 232–252 form a helical membrane-spanning segment; that stretch reads SFFLGVLVTLMILSPVIVYLW.

It localises to the membrane. This is an uncharacterized protein from Pyrococcus abyssi (strain GE5 / Orsay).